Here is a 94-residue protein sequence, read N- to C-terminus: Long neurotoxin LNTX37 (94 aa).

Residues 1-21 (MKTLLLTLVVVTIMCLDLGYT) form the signal peptide. Cystine bridges form between cysteine 24–cysteine 43, cysteine 36–cysteine 64, cysteine 49–cysteine 53, cysteine 68–cysteine 79, and cysteine 80–cysteine 85.

This sequence belongs to the three-finger toxin family. Long-chain subfamily. Type II alpha-neurotoxin sub-subfamily. In terms of tissue distribution, expressed by the venom gland.

The protein localises to the secreted. Binds with high affinity to muscular (alpha-1/CHRNA1) and neuronal (alpha-7/CHRNA7) nicotinic acetylcholine receptor (nAChR) and inhibits acetylcholine from binding to the receptor, thereby impairing neuromuscular and neuronal transmission. This chain is Long neurotoxin LNTX37, found in Ophiophagus hannah (King cobra).